The chain runs to 403 residues: Propionate kinase (403 aa).

Belongs to the acetokinase family. PduW subfamily.

It localises to the cytoplasm. The catalysed reaction is propanoate + ATP = propanoyl phosphate + ADP. The protein operates within polyol metabolism; 1,2-propanediol degradation. In terms of biological role, works with phosphate acetyltransferase (pta) to capture exogenous propionate and regenerate propionyl-CoA during degradation of 1,2-propanediol (1,2-PD). In Citrobacter rodentium (strain ICC168) (Citrobacter freundii biotype 4280), this protein is Propionate kinase.